The primary structure comprises 360 residues: Peptide chain release factor 1 (360 aa).

The residue at position 235 (glutamine 235) is an N5-methylglutamine. The tract at residues 284–313 (AKRQQAEASTRRNLLGSGDRSDRNRTYNFP) is disordered.

This sequence belongs to the prokaryotic/mitochondrial release factor family. In terms of processing, methylated by PrmC. Methylation increases the termination efficiency of RF1.

It is found in the cytoplasm. Its function is as follows. Peptide chain release factor 1 directs the termination of translation in response to the peptide chain termination codons UAG and UAA. The polypeptide is Peptide chain release factor 1 (Salmonella gallinarum (strain 287/91 / NCTC 13346)).